Consider the following 464-residue polypeptide: Cysteine--tRNA ligase (464 aa).

Cys-32 serves as a coordination point for Zn(2+). Positions 34–44 (VTVYDDCHIGH) match the 'HIGH' region motif. The Zn(2+) site is built by Cys-213, His-238, and Glu-242. A 'KMSKS' region motif is present at residues 270–274 (KMSKS). Lys-273 is a binding site for ATP.

This sequence belongs to the class-I aminoacyl-tRNA synthetase family. In terms of assembly, monomer. Zn(2+) is required as a cofactor.

It is found in the cytoplasm. It catalyses the reaction tRNA(Cys) + L-cysteine + ATP = L-cysteinyl-tRNA(Cys) + AMP + diphosphate. The sequence is that of Cysteine--tRNA ligase from Francisella tularensis subsp. tularensis (strain SCHU S4 / Schu 4).